The chain runs to 248 residues: MSEAAQTLDGWYCLHDFRTIDWSAWKMLPNEERQAAIDEFLALVDKWETTESEQQGSHAIYTIVGQKADILFMILRPTLDELHEIETALNKTKLAEYLLPAYSYVSVVELSNYLASGNEDPYQIPEVRRRLYPILPKTNYICFYPMDKRRQGDDNWYMLSMEQRRELMRAHGMTGRKYAGKVTQIITGSVGLDDFEWGVTLFSDDALQFKKLVYEMRFDEVSARFGEFGSFFVGNRLAAENVPTFFHI.

Fe-coproporphyrin III-binding positions include R130, 144-148 (YPMDK), H171, Q184, and S222. Y144 is an active-site residue.

This sequence belongs to the ChdC family. Type 1 subfamily. Requires Fe-coproporphyrin III as cofactor.

The enzyme catalyses Fe-coproporphyrin III + 2 H2O2 + 2 H(+) = heme b + 2 CO2 + 4 H2O. It catalyses the reaction Fe-coproporphyrin III + H2O2 + H(+) = harderoheme III + CO2 + 2 H2O. The catalysed reaction is harderoheme III + H2O2 + H(+) = heme b + CO2 + 2 H2O. The protein operates within porphyrin-containing compound metabolism; protoheme biosynthesis. Functionally, involved in coproporphyrin-dependent heme b biosynthesis. Catalyzes the decarboxylation of Fe-coproporphyrin III (coproheme) to heme b (protoheme IX), the last step of the pathway. The reaction occurs in a stepwise manner with a three-propionate intermediate. The protein is Coproheme decarboxylase of Geobacillus thermodenitrificans (strain NG80-2).